The primary structure comprises 153 residues: Protein Smg homolog (153 aa).

Belongs to the Smg family.

The sequence is that of Protein Smg homolog from Neisseria gonorrhoeae (strain ATCC 700825 / FA 1090).